Here is a 461-residue protein sequence, read N- to C-terminus: MSRPKNQNYKGHGLQKGKEREQRASIRFKTTLMNTLMDVLRHRPGWVEVKDEGEWDFYWCDVSWLRENFDHTYMGEHVRISHFRNHYELTRKNYMVKNLKRFRKQLEREAGKLEAAKCDFFPKTFEMPCEYHLFVEEFRKNPGITWIMKPVARSQGKGIFLFRRLKDIMDWKKGTAGKKLTSLEAQPARNTVNPSGSHDTRSSDDQKDEIPVENYVAQRYIENPYLIGGRKFDLRVYVLVMSYIPLRAWLYRDGFARFSNTRFTLNSIDDQYVHLTNVAVQKTSPDYHPKKGCKWMLQRFRQYLASKHGPEAVETLFSDMDNIFIRSLQSVQKVIISDKHCFELYGYDILIDQDLKPWLLEVNASPSLTASSQEDYELKTCLLEDTLHIVDMEARLTGREKRVGGFDLMWNDGPVSREEGGPDLSGMGNFVTNTHLGCVNDRKEQLRQLFRSLQGQKKTPN.

The interval 1 to 21 (MSRPKNQNYKGHGLQKGKERE) is disordered. The TTL domain maps to 22–402 (QRASIRFKTT…EARLTGREKR (381 aa)). Residues K149 and 155-156 (QG) contribute to the ATP site. Q155 contacts a protein. The disordered stretch occupies residues 182–208 (SLEAQPARNTVNPSGSHDTRSSDDQKD). The segment covering 188–197 (ARNTVNPSGS) has biased composition (polar residues). The span at 198–208 (HDTRSSDDQKD) shows a compositional bias: basic and acidic residues. ATP-binding positions include 218–221 (QRYI) and 231–233 (KFD). An L-glutamate-binding site is contributed by R257. 276 to 277 (TN) is an ATP binding site. Residue K294 participates in L-glutamate binding. Residues D348, E361, and N363 each contribute to the Mg(2+) site. Residue K379 coordinates L-glutamate.

The protein belongs to the tubulin--tyrosine ligase family. Requires Mg(2+) as cofactor.

The protein resides in the cytoplasm. It is found in the cytoskeleton. Its subcellular location is the cilium basal body. The protein localises to the flagellum axoneme. The enzyme catalyses (L-glutamyl)(n)-gamma-L-glutamyl-L-glutamyl-[protein] + L-glutamate + ATP = (L-glutamyl)(n+1)-gamma-L-glutamyl-L-glutamyl-[protein] + ADP + phosphate + H(+). In terms of biological role, probable tubulin polyglutamylase that generates side chains of glutamate on the gamma-carboxyl group of specific glutamate residues within the C-terminal tail of target proteins. Similar to TTLL1, may acquire enzymatic activity only in complex with other proteins as it is most likely lacking domains important for autonomous activity. Mediates tubulin polyglutamylation which induces establishment of microtubule heterogeneity in sperm flagella, thereby playing a role in normal motile flagella axoneme structure and sperm flagella beating pattern. The sequence is that of Probable tubulin polyglutamylase TTLL9 (TTLL9) from Bos taurus (Bovine).